We begin with the raw amino-acid sequence, 328 residues long: tRNA uridine(34) hydroxylase (328 aa).

Residues 130–224 form the Rhodanese domain; the sequence is LDEDTVVLDT…YGKDPEVQGE (95 aa). Cys-184 serves as the catalytic Cysteine persulfide intermediate.

It belongs to the TrhO family.

The enzyme catalyses uridine(34) in tRNA + AH2 + O2 = 5-hydroxyuridine(34) in tRNA + A + H2O. Its function is as follows. Catalyzes oxygen-dependent 5-hydroxyuridine (ho5U) modification at position 34 in tRNAs. The protein is tRNA uridine(34) hydroxylase of Streptococcus pyogenes serotype M28 (strain MGAS6180).